The following is an 89-amino-acid chain: MGLEDERKMLTGSGDPKEEEEEELVDPLTTVREHCEQLEKCVKARERLESCDRRVSSRSQTEEDCTEELFDFLHARDHCVAHKLFKSLK.

The transit peptide at 1 to 13 directs the protein to the mitochondrion; the sequence is MGLEDERKMLTGS. Residues 1-27 are disordered; sequence MGLEDERKMLTGSGDPKEEEEEELVDP. Intrachain disulfides connect Cys-35-Cys-79 and Cys-51-Cys-65. Position 40 is an N6-acetyllysine (Lys-40). N6-acetyllysine is present on Lys-83.

It belongs to the UQCRH/QCR6 family. As to quaternary structure, component of the ubiquinol-cytochrome c oxidoreductase (cytochrome b-c1 complex, complex III, CIII), a multisubunit enzyme composed of 11 subunits. The complex is composed of 3 respiratory subunits cytochrome b, cytochrome c1 and Rieske protein UQCRFS1, 2 core protein subunits UQCRC1/QCR1 and UQCRC2/QCR2, and 6 low-molecular weight protein subunits UQCRH/QCR6, UQCRB/QCR7, UQCRQ/QCR8, UQCR10/QCR9, UQCR11/QCR10 and subunit 9, the cleavage product of Rieske protein UQCRFS1. The complex exists as an obligatory dimer and forms supercomplexes (SCs) in the inner mitochondrial membrane with NADH-ubiquinone oxidoreductase (complex I, CI) and cytochrome c oxidase (complex IV, CIV), resulting in different assemblies (supercomplex SCI(1)III(2)IV(1) and megacomplex MCI(2)III(2)IV(2)).

Its subcellular location is the mitochondrion inner membrane. In terms of biological role, component of the ubiquinol-cytochrome c oxidoreductase, a multisubunit transmembrane complex that is part of the mitochondrial electron transport chain which drives oxidative phosphorylation. The respiratory chain contains 3 multisubunit complexes succinate dehydrogenase (complex II, CII), ubiquinol-cytochrome c oxidoreductase (cytochrome b-c1 complex, complex III, CIII) and cytochrome c oxidase (complex IV, CIV), that cooperate to transfer electrons derived from NADH and succinate to molecular oxygen, creating an electrochemical gradient over the inner membrane that drives transmembrane transport and the ATP synthase. The cytochrome b-c1 complex catalyzes electron transfer from ubiquinol to cytochrome c, linking this redox reaction to translocation of protons across the mitochondrial inner membrane, with protons being carried across the membrane as hydrogens on the quinol. In the process called Q cycle, 2 protons are consumed from the matrix, 4 protons are released into the intermembrane space and 2 electrons are passed to cytochrome c. The sequence is that of Cytochrome b-c1 complex subunit 6, mitochondrial (Uqcrh) from Rattus norvegicus (Rat).